The chain runs to 259 residues: 5'-nucleotidase SurE (259 aa).

A divalent metal cation is bound by residues Asp8, Asp9, Ser40, and Asn92.

The protein belongs to the SurE nucleotidase family. Requires a divalent metal cation as cofactor.

Its subcellular location is the cytoplasm. The catalysed reaction is a ribonucleoside 5'-phosphate + H2O = a ribonucleoside + phosphate. Functionally, nucleotidase that shows phosphatase activity on nucleoside 5'-monophosphates. This is 5'-nucleotidase SurE from Stenotrophomonas maltophilia (strain R551-3).